Reading from the N-terminus, the 227-residue chain is AN1-type zinc finger protein 3 (227 aa).

An A20-type zinc finger spans residues 12–44; the sequence is PSLPPRCPCGFWGSSKTMNLCSKCFADFQKKQP. Zn(2+) is bound by residues Cys-18, Cys-20, Cys-32, and Cys-35. Residues 41-151 form a disordered region; that stretch reads KKQPDDDSTP…RPEESGRSKQ (111 aa). Low complexity-rich tracts occupy residues 49–59 and 66–77; these read TPSTSNSQSDL and SDNNNTSVTTPT. Composition is skewed to polar residues over residues 78 to 94 and 111 to 127; these read LSPS…VTSP and ITPT…SESE. Positions 135–148 are enriched in basic and acidic residues; it reads RLVENPERPEESGR. The AN1-type zinc finger occupies 151–200; sequence QKSRRRCFQCQTKLELVQQELGSCRCGYVFCMLHRLPEQHDCTFDHMGRG. The Zn(2+) site is built by Cys-157, Cys-160, Cys-174, Cys-176, Cys-181, His-184, His-190, and Cys-192.

The chain is AN1-type zinc finger protein 3 (Zfand3) from Rattus norvegicus (Rat).